The chain runs to 175 residues: Large ribosomal subunit protein uL10 (175 aa).

The protein belongs to the universal ribosomal protein uL10 family. In terms of assembly, part of the ribosomal stalk of the 50S ribosomal subunit. The N-terminus interacts with L11 and the large rRNA to form the base of the stalk. The C-terminus forms an elongated spine to which L12 dimers bind in a sequential fashion forming a multimeric L10(L12)X complex.

Functionally, forms part of the ribosomal stalk, playing a central role in the interaction of the ribosome with GTP-bound translation factors. This chain is Large ribosomal subunit protein uL10, found in Prochlorococcus marinus (strain MIT 9215).